The following is a 587-amino-acid chain: Polyadenylate-binding protein-interacting protein 3 (587 aa).

The 82-residue stretch at 51–132 (LLVYFTTCNI…LVQVIAKDLP (82 aa)) folds into the Sm domain. Residues 422 to 503 (AKSENSSGWP…QSPQSPVFDG (82 aa)) are disordered. The span at 431-464 (PGSSISRNSENSAASSASNLPILSPSSSGSLSSE) shows a compositional bias: low complexity. The short motif at 467 to 475 (TLNPNAKEF) is the PAM2-like 1; degenerate element. Residues 476–486 (KLNPNAKSFKP) carry the PAM2-like 2 motif. Polar residues predominate over residues 486 to 498 (PSPSATRPQSPQS).

The sequence is that of Polyadenylate-binding protein-interacting protein 3 (CID3) from Arabidopsis thaliana (Mouse-ear cress).